A 33-amino-acid polypeptide reads, in one-letter code: Cytochrome b6-f complex subunit 8 (33 aa).

Residues 2-22 (IFTLGWASLAAIFTFSIAMVV) form a helical membrane-spanning segment.

It belongs to the PetN family. As to quaternary structure, the 4 large subunits of the cytochrome b6-f complex are cytochrome b6, subunit IV (17 kDa polypeptide, PetD), cytochrome f and the Rieske protein, while the 4 small subunits are PetG, PetL, PetM and PetN. The complex functions as a dimer.

It localises to the cellular thylakoid membrane. Component of the cytochrome b6-f complex, which mediates electron transfer between photosystem II (PSII) and photosystem I (PSI), cyclic electron flow around PSI, and state transitions. In Prochlorococcus marinus (strain NATL2A), this protein is Cytochrome b6-f complex subunit 8.